We begin with the raw amino-acid sequence, 130 residues long: Holo-[acyl-carrier-protein] synthase (130 aa).

Positions 9 and 58 each coordinate Mg(2+).

The protein belongs to the P-Pant transferase superfamily. AcpS family. Requires Mg(2+) as cofactor.

Its subcellular location is the cytoplasm. It catalyses the reaction apo-[ACP] + CoA = holo-[ACP] + adenosine 3',5'-bisphosphate + H(+). Transfers the 4'-phosphopantetheine moiety from coenzyme A to a Ser of acyl-carrier-protein. The protein is Holo-[acyl-carrier-protein] synthase of Mycolicibacterium paratuberculosis (strain ATCC BAA-968 / K-10) (Mycobacterium paratuberculosis).